Here is a 342-residue protein sequence, read N- to C-terminus: Ubiquitin fusion degradation protein 1 homolog (342 aa).

Disordered stretches follow at residues 245–276 and 318–342; these read FGGA…SNAA and EKEA…RGAR. Polar residues predominate over residues 259–275; sequence SSSVSLSDGTGVSTSNA.

This sequence belongs to the UFD1 family. Forms a complex composed of ubxn-3, ufd-1, npl-4.1 and cdc-48.1; within the complex interacts with cdc-48.1. Interacts with cdc-48.2. Interacts with npl-4.1 and/or npl-4.2.

It is found in the cytoplasm. The protein resides in the nucleus. Functions at a post-ubiquitination step in the ubiquitin fusion degradation (UFD) pathway. In association with npl-4.1 and/or npl-4.2 and ATPase cdc-48.1 and/or cdc-48.2, involved in the cytoplasmic elimination of misfolded proteins exported from the ER. This pathway, known as ERAD, prevents the activation of the unfolded protein response (UPR) caused by the accumulation of misfolded proteins in the ER. During S phase and in association with npl-4.1 and/or npl-4.2, cdc-48.1 and/or cdc-48.2 and ubxn-3, ensures the degradation of DNA licensing factor cdt-1 after the initiation of DNA replication and thus the disassembly of the DNA replication CMG helicase complex by promoting the dissociation from chromatin of several of its components including cdc-45 and sld-5. Regulates ubxn-3 nuclear localization during S phase. This chain is Ubiquitin fusion degradation protein 1 homolog (ufd-1), found in Caenorhabditis elegans.